The sequence spans 355 residues: UDP-N-acetylglucosamine--N-acetylmuramyl-(pentapeptide) pyrophosphoryl-undecaprenol N-acetylglucosamine transferase (355 aa).

UDP-N-acetyl-alpha-D-glucosamine-binding positions include 14–16 (TGG), Asn126, Arg162, Ser190, Ile243, 262–267 (ALTVSE), and Gln287.

Belongs to the glycosyltransferase 28 family. MurG subfamily.

It is found in the cell inner membrane. The enzyme catalyses di-trans,octa-cis-undecaprenyl diphospho-N-acetyl-alpha-D-muramoyl-L-alanyl-D-glutamyl-meso-2,6-diaminopimeloyl-D-alanyl-D-alanine + UDP-N-acetyl-alpha-D-glucosamine = di-trans,octa-cis-undecaprenyl diphospho-[N-acetyl-alpha-D-glucosaminyl-(1-&gt;4)]-N-acetyl-alpha-D-muramoyl-L-alanyl-D-glutamyl-meso-2,6-diaminopimeloyl-D-alanyl-D-alanine + UDP + H(+). It participates in cell wall biogenesis; peptidoglycan biosynthesis. Functionally, cell wall formation. Catalyzes the transfer of a GlcNAc subunit on undecaprenyl-pyrophosphoryl-MurNAc-pentapeptide (lipid intermediate I) to form undecaprenyl-pyrophosphoryl-MurNAc-(pentapeptide)GlcNAc (lipid intermediate II). This chain is UDP-N-acetylglucosamine--N-acetylmuramyl-(pentapeptide) pyrophosphoryl-undecaprenol N-acetylglucosamine transferase, found in Vibrio vulnificus (strain YJ016).